Reading from the N-terminus, the 148-residue chain is Large ribosomal subunit protein uL15 (148 aa).

Basic residues predominate over residues 1 to 28; sequence MIRRRKKVRKLRGSHTHGWGCKKKHRGG. The interval 1–43 is disordered; it reads MIRRRKKVRKLRGSHTHGWGCKKKHRGGGSKGGRGMAGTGKRK. The span at 29 to 38 shows a compositional bias: gly residues; it reads GSKGGRGMAG.

The protein belongs to the universal ribosomal protein uL15 family. In terms of assembly, part of the 50S ribosomal subunit.

Its function is as follows. Binds to the 23S rRNA. The protein is Large ribosomal subunit protein uL15 of Thermococcus kodakarensis (strain ATCC BAA-918 / JCM 12380 / KOD1) (Pyrococcus kodakaraensis (strain KOD1)).